The primary structure comprises 218 residues: MTTLPFPLAEAPDALTEERGRKLFAGNTDFLKGVVAMDGLPPADRIEVCFAGRSNVGKSTLINALTGRKGLARASNTPGRTQEINYFTLLDSHYLVDLPGYGYAEAPLHVVQQWQALLKSYLQGRATLRRAFVLIDARHGVKAVDEEIMKLLDIAAVPFQTVLTKSDKVKGRDRDASLARTRKALANHPAAYPEIILTSSEKGDGIPTLRATIATIET.

In terms of domain architecture, EngB-type G spans 44–218 (DRIEVCFAGR…LRATIATIET (175 aa)). Residues 52–59 (GRSNVGKS), 79–83 (GRTQE), 97–100 (DLPG), 164–167 (TKSD), and 198–200 (TSS) each bind GTP. 2 residues coordinate Mg(2+): Ser-59 and Thr-81.

This sequence belongs to the TRAFAC class TrmE-Era-EngA-EngB-Septin-like GTPase superfamily. EngB GTPase family. Mg(2+) serves as cofactor.

Its function is as follows. Necessary for normal cell division and for the maintenance of normal septation. This Jannaschia sp. (strain CCS1) protein is Probable GTP-binding protein EngB.